The following is a 239-amino-acid chain: 1-(5-phosphoribosyl)-5-[(5-phosphoribosylamino)methylideneamino] imidazole-4-carboxamide isomerase (239 aa).

Aspartate 8 functions as the Proton acceptor in the catalytic mechanism. Residue aspartate 129 is the Proton donor of the active site.

This sequence belongs to the HisA/HisF family.

The protein resides in the cytoplasm. It catalyses the reaction 1-(5-phospho-beta-D-ribosyl)-5-[(5-phospho-beta-D-ribosylamino)methylideneamino]imidazole-4-carboxamide = 5-[(5-phospho-1-deoxy-D-ribulos-1-ylimino)methylamino]-1-(5-phospho-beta-D-ribosyl)imidazole-4-carboxamide. It participates in amino-acid biosynthesis; L-histidine biosynthesis; L-histidine from 5-phospho-alpha-D-ribose 1-diphosphate: step 4/9. The chain is 1-(5-phosphoribosyl)-5-[(5-phosphoribosylamino)methylideneamino] imidazole-4-carboxamide isomerase from Bacillus cereus (strain ATCC 10987 / NRS 248).